Reading from the N-terminus, the 300-residue chain is Ribosome-inactivating protein 3 (300 aa).

Glu-207 is a catalytic residue.

Belongs to the ribosome-inactivating protein family. Type 1 RIP subfamily. Monomer. Accumulates to high levels in seeds.

The protein localises to the cytoplasm. It catalyses the reaction Endohydrolysis of the N-glycosidic bond at one specific adenosine on the 28S rRNA.. Possesses features of some constitutive defense agent. The coordinate Opaque-2-controlled synthesis of this protein and the major seed storage proteins (zeins) may provide the germinating seedling with both nutritional benefits and protection against pathogen invasion of the surrounding endosperm. In Zea mays (Maize), this protein is Ribosome-inactivating protein 3 (CRIP3).